A 457-amino-acid polypeptide reads, in one-letter code: D(1B) dopamine receptor (457 aa).

Residues M1–Q41 lie on the Extracellular side of the membrane. The N-linked (GlcNAc...) asparagine glycan is linked to N24. Residues I42–M67 form a helical membrane-spanning segment. The Cytoplasmic portion of the chain corresponds to R68–N78. The helical transmembrane segment at I79–A105 threads the bilayer. Over G106 to C114 the chain is Extracellular. A disulfide bond links C114 and C199. The helical transmembrane segment at D115–V137 threads the bilayer. Over D138–R156 the chain is Cytoplasmic. Residues V157–W181 form a helical membrane-spanning segment. At H182 to R205 the chain is on the extracellular side. A helical membrane pass occupies residues T206–Y231. Residues R232–K282 lie on the Cytoplasmic side of the membrane. The helical transmembrane segment at T283–D309 threads the bilayer. At R310–T326 the chain is on the extracellular side. Residues F327–F351 traverse the membrane as a helical segment. The Cytoplasmic segment spans residues R352–H457. The S-palmitoyl cysteine moiety is linked to residue C361.

This sequence belongs to the G-protein coupled receptor 1 family. As to expression, brain and kidney.

Its subcellular location is the cell membrane. In terms of biological role, dopamine receptor whose activity is mediated by G proteins which activate adenylyl cyclase. This Xenopus laevis (African clawed frog) protein is D(1B) dopamine receptor (drd5).